Here is a 282-residue protein sequence, read N- to C-terminus: Snake venom serine protease NaSP (282 aa).

An N-terminal signal peptide occupies residues 1–18; that stretch reads MVLIRVLASLLILQLSYS. The propeptide occupies 19 to 56; that stretch reads KSLDDGAKESAYDDEIQQSSWGNSTVNTTLTETVVIQL. Asparagine 41 and asparagine 45 each carry an N-linked (GlcNAc...) asparagine glycan. Residues 57 to 280 enclose the Peptidase S1 domain; the sequence is IMGGSECYKS…YIDWIRGIIA (224 aa). 5 disulfides stabilise this stretch: cysteine 63–cysteine 195, cysteine 82–cysteine 98, cysteine 174–cysteine 241, cysteine 206–cysteine 220, and cysteine 231–cysteine 256. Catalysis depends on histidine 97, which acts as the Charge relay system. Residue asparagine 135 is glycosylated (N-linked (GlcNAc...) asparagine). Residue aspartate 142 is the Charge relay system of the active site. 2 N-linked (GlcNAc...) asparagine glycosylation sites follow: asparagine 149 and asparagine 153. Serine 235 acts as the Charge relay system in catalysis.

This sequence belongs to the peptidase S1 family. Snake venom subfamily. As to quaternary structure, monomer. In terms of tissue distribution, expressed by the venom gland.

It is found in the secreted. In terms of biological role, snake venom serine protease that may act in the hemostasis system of the prey. The chain is Snake venom serine protease NaSP from Naja atra (Chinese cobra).